The following is a 56-amino-acid chain: Meucin-25 (56 aa).

An N-terminal signal peptide occupies residues 1-31 (MFRIEYSLVQLLLRNVTIPLLLIIQMHIMSS).

Belongs to the non-disulfide-bridged peptide (NDBP) superfamily. Antimalarial peptide (group 5) family. As to expression, expressed by the venom gland.

It is found in the secreted. In terms of biological role, this synthetic cationic peptide inhibits the development of Plasmodium berghei ookinetes, kills intraerythrocytic P.falciparum, and is cytotoxic to the Drosophila S2 cell at micromolar concentrations. No antibacterial, antifungal and hemolytic activities have been found at micromolar concentrations. This Mesobuthus eupeus (Lesser Asian scorpion) protein is Meucin-25.